A 274-amino-acid polypeptide reads, in one-letter code: MSTYFISDIHGCYEEFRILLEKSSFNDKKDYLWIAGDLVSRGPDSLKVVKYLYSLKDRVQIVLGNHDINLIAVHAGIKDNKKENYFDEFLSSPDSVELINWLRCQSFLKVDEKRKIIMSHAGISPQWDINIAKVCALEIEDRLSHKNYALFLKEIYHNNIDFWRLDLNQLDRLRYSMNSFTRMRYCYPDGRLNMFCKKSPDFVKYPLRPWFLMPSSISKVYSIFFGHWSSLKGTHVPKPFFPLDAGCCWGEELVMLRWEDGKWFSQAYLSKKCI.

It belongs to the Ap4A hydrolase family.

It catalyses the reaction P(1),P(4)-bis(5'-adenosyl) tetraphosphate + H2O = 2 ADP + 2 H(+). Its function is as follows. Hydrolyzes diadenosine 5',5'''-P1,P4-tetraphosphate to yield ADP. The chain is Bis(5'-nucleosyl)-tetraphosphatase, symmetrical from Buchnera aphidicola subsp. Acyrthosiphon pisum (strain 5A).